A 391-amino-acid polypeptide reads, in one-letter code: Acetate kinase (391 aa).

N4 is a Mg(2+) binding site. K11 contacts ATP. R85 is a substrate binding site. Catalysis depends on D142, which acts as the Proton donor/acceptor. Residues 202–206 (HLGNG), 277–279 (DLR), and 325–329 (GIGEN) contribute to the ATP site. E378 is a binding site for Mg(2+).

This sequence belongs to the acetokinase family. Homodimer. The cofactor is Mg(2+). Requires Mn(2+) as cofactor.

Its subcellular location is the cytoplasm. It catalyses the reaction acetate + ATP = acetyl phosphate + ADP. Its pathway is metabolic intermediate biosynthesis; acetyl-CoA biosynthesis; acetyl-CoA from acetate: step 1/2. Its function is as follows. Catalyzes the formation of acetyl phosphate from acetate and ATP. Can also catalyze the reverse reaction. The polypeptide is Acetate kinase (Halalkalibacterium halodurans (strain ATCC BAA-125 / DSM 18197 / FERM 7344 / JCM 9153 / C-125) (Bacillus halodurans)).